The primary structure comprises 134 residues: Small ribosomal subunit protein uS11 (134 aa).

Disordered stretches follow at residues 1-24 (MPPKSRAGAVKKVRRKEKKNVAHG) and 115-134 (IQDVTPQPHNGCRPPKRRRV). Over residues 9 to 18 (AVKKVRRKEK) the composition is skewed to basic residues.

It belongs to the universal ribosomal protein uS11 family. As to quaternary structure, part of the 30S ribosomal subunit. Interacts with proteins S7 and S18. Binds to IF-3.

In terms of biological role, located on the platform of the 30S subunit, it bridges several disparate RNA helices of the 16S rRNA. Forms part of the Shine-Dalgarno cleft in the 70S ribosome. In Saccharopolyspora erythraea (strain ATCC 11635 / DSM 40517 / JCM 4748 / NBRC 13426 / NCIMB 8594 / NRRL 2338), this protein is Small ribosomal subunit protein uS11.